A 194-amino-acid polypeptide reads, in one-letter code: Large ribosomal subunit protein bL9 (194 aa).

Residues 156-167 are compositionally biased toward basic and acidic residues; that stretch reads RGEDISSRREDQ. The interval 156–194 is disordered; sequence RGEDISSRREDQDAAAEAIAAAGEFFDPDAQQDEEPEQQ. Over residues 181-194 the composition is skewed to acidic residues; it reads FDPDAQQDEEPEQQ.

It belongs to the bacterial ribosomal protein bL9 family.

Binds to the 23S rRNA. The chain is Large ribosomal subunit protein bL9 from Rhodopseudomonas palustris (strain BisB5).